The following is a 518-amino-acid chain: Retinal dehydrogenase 2 (518 aa).

Tyrosine 168 is modified (phosphotyrosine). NAD(+)-binding positions include 184-186 (IPW), 210-213 (KPAE), and 264-266 (STE). Catalysis depends on glutamate 286, which acts as the Proton acceptor. Cysteine 320 serves as the catalytic Nucleophile. A Phosphoserine modification is found at serine 351. NAD(+) contacts are provided by residues 366 to 370 (KQYNK) and glutamate 417.

It belongs to the aldehyde dehydrogenase family. In terms of assembly, homotetramer.

The protein localises to the cytoplasm. It carries out the reaction retinal + NAD(+) + H2O = retinoate + NADH + 2 H(+). The catalysed reaction is all-trans-retinal + NAD(+) + H2O = all-trans-retinoate + NADH + 2 H(+). It catalyses the reaction all-trans-13,14-dihydroretinal + NAD(+) + H2O = all-trans-13,14-dihydroretinoate + NADH + 2 H(+). The protein operates within cofactor metabolism; retinol metabolism. Functionally, catalyzes the NAD-dependent oxidation of aldehyde substrates, such as all-trans-retinal and all-trans-13,14-dihydroretinal, to their corresponding carboxylic acids, all-trans-retinoate and all-trans-13,14-dihydroretinoate, respectively. Retinoate signaling is critical for the transcriptional control of many genes, for instance it is crucial for initiation of meiosis in both male and female. Recognizes retinal as substrate, both in its free form and when bound to cellular retinol-binding protein. Can metabolize octanal and decanal, but has only very low activity with benzaldehyde, acetaldehyde and propanal. Displays complete lack of activity with citral. This Homo sapiens (Human) protein is Retinal dehydrogenase 2 (ALDH1A2).